Reading from the N-terminus, the 327-residue chain is 4-diphosphocytidyl-2-C-methyl-D-erythritol kinase (327 aa).

Lys-14 is an active-site residue. Residue 97-107 participates in ATP binding; that stretch reads PDGAGLGGGSA. The active site involves Asp-140.

The protein belongs to the GHMP kinase family. IspE subfamily.

The enzyme catalyses 4-CDP-2-C-methyl-D-erythritol + ATP = 4-CDP-2-C-methyl-D-erythritol 2-phosphate + ADP + H(+). Its pathway is isoprenoid biosynthesis; isopentenyl diphosphate biosynthesis via DXP pathway; isopentenyl diphosphate from 1-deoxy-D-xylulose 5-phosphate: step 3/6. Its function is as follows. Catalyzes the phosphorylation of the position 2 hydroxy group of 4-diphosphocytidyl-2C-methyl-D-erythritol. This is 4-diphosphocytidyl-2-C-methyl-D-erythritol kinase from Oleidesulfovibrio alaskensis (strain ATCC BAA-1058 / DSM 17464 / G20) (Desulfovibrio alaskensis).